Reading from the N-terminus, the 263-residue chain is MHLNNLNNFNNLENNGEYHCSGPIIKKPFRHIALTVPSSDITNFNEIFYVEPQYIAQAIRLTNTFQGAIDPLTLNFNFEKALQIANGLPNAGVTGTINQSVIHQTIEVSVMISQIKEIIRSVLGLVINSANFWNSVVSAITNTFTNLEPQVDENWIVWRNLSATQTSYFYKILFSIQNEDTGRFMAILPIAFEITVDVQKQQLLFITIKDSARYEVKMKALTVVQALDSYNAPIIDVFNVRNYSLHRPNHNILQNLNVNPIKS.

It belongs to the cyt1/cyt2 endotoxin family. Post-translationally, active after proteolytic processing.

In terms of biological role, kills the larvae of dipteran insects by making pores in the epithelial cell membrane of the insect midgut. This chain is Type-2Ba cytolytic delta-endotoxin (cyt2Ba1), found in Bacillus thuringiensis subsp. israelensis.